Consider the following 309-residue polypeptide: ESX-3 secretion system protein EccE3 (309 aa).

2 helical membrane passes run 5-25 (IALA…QTTT) and 29-49 (VLGV…GMFL).

This sequence belongs to the EccE family. In terms of assembly, part of the ESX-3 / type VII secretion system (T7SS), which is composed of cytosolic and membrane components. The ESX-3 membrane complex is composed of EccB3, EccC3, EccD3 and EccE3.

The protein localises to the cell inner membrane. Functionally, part of the ESX-3 specialized secretion system, which is required for siderophore-mediated iron acquisition and for the secretion of EsxH and EsxG. This chain is ESX-3 secretion system protein EccE3, found in Mycolicibacterium smegmatis (strain ATCC 700084 / mc(2)155) (Mycobacterium smegmatis).